A 254-amino-acid polypeptide reads, in one-letter code: Kallikrein-4 (254 aa).

The signal sequence occupies residues 1 to 26 (MATAGNPWGWFLGYLILGVAGSLVSG). Residues 27–30 (SCSQ) constitute a propeptide that is removed on maturation. The region spanning 31–252 (IINGEDCSPH…FTEWIEKTVQ (222 aa)) is the Peptidase S1 domain. 6 cysteine pairs are disulfide-bonded: cysteine 37–cysteine 167, cysteine 56–cysteine 72, cysteine 141–cysteine 241, cysteine 148–cysteine 213, cysteine 178–cysteine 192, and cysteine 203–cysteine 228. Histidine 40 is a binding site for Zn(2+). Histidine 71 acts as the Charge relay system in catalysis. Glutamate 91 contributes to the Zn(2+) binding site. Aspartate 116 functions as the Charge relay system in the catalytic mechanism. An N-linked (GlcNAc...) asparagine glycan is attached at asparagine 169. Serine 207 functions as the Charge relay system in the catalytic mechanism.

This sequence belongs to the peptidase S1 family. Kallikrein subfamily. In terms of processing, N-glycosylated. The N-glycan structures are of complex diantennary or triantennary type, which may be further modified with up to 2 sialic acid residues. In terms of tissue distribution, expressed in prostate.

Its subcellular location is the secreted. Has a major role in enamel formation. Required during the maturation stage of tooth development for clearance of enamel proteins and normal structural patterning of the crystalline matrix. This Homo sapiens (Human) protein is Kallikrein-4 (KLK4).